We begin with the raw amino-acid sequence, 213 residues long: Protein GET1 (213 aa).

The Lumenal portion of the chain corresponds to 1 to 4; that stretch reads MPSL. A helical membrane pass occupies residues 5–24; that stretch reads LLVVFILQFLLHIINTVGAS. At 25 to 110 the chain is on the cytoplasmic side; sequence TVNDLLWILY…AFTSAVSTLR (86 aa). A coiled-coil region spans residues 41 to 68; it reads TSSSAQKAQKLKKEIVQLKRELGATSAQ. Residues 111 to 131 form a helical membrane-spanning segment; sequence WLGTQGLRFVLQFWFAKSPMF. Residues 132–155 are Lumenal-facing; the sequence is WMPAGWLPFYVEWILSFPRAPLGS. Residues 156–172 form a helical membrane-spanning segment; that stretch reads VSINVWGIACASMIALA. At 173–213 the chain is on the cytoplasmic side; that stretch reads AEGLAAVWVLATKRPTPIATEKKEAMAFAADQKSSGEKKEL.

It belongs to the WRB/GET1 family. Interacts with GET3.

Its subcellular location is the endoplasmic reticulum membrane. In terms of biological role, required for the post-translational delivery of tail-anchored (TA) proteins to the endoplasmic reticulum. Acts as a membrane receptor for soluble GET3, which recognizes and selectively binds the transmembrane domain of TA proteins in the cytosol. The chain is Protein GET1 from Phaeosphaeria nodorum (strain SN15 / ATCC MYA-4574 / FGSC 10173) (Glume blotch fungus).